We begin with the raw amino-acid sequence, 104 residues long: L-rhamnose mutarotase (104 aa).

Tyrosine 18 is a binding site for substrate. Histidine 22 serves as the catalytic Proton donor. Residues tyrosine 41 and tryptophan 76–tryptophan 77 contribute to the substrate site.

It belongs to the rhamnose mutarotase family. Homodimer.

The protein localises to the cytoplasm. The enzyme catalyses alpha-L-rhamnose = beta-L-rhamnose. Its pathway is carbohydrate metabolism; L-rhamnose metabolism. Functionally, involved in the anomeric conversion of L-rhamnose. The chain is L-rhamnose mutarotase from Enterobacter sp. (strain 638).